The sequence spans 355 residues: Phosphoserine aminotransferase (355 aa).

Arginine 41 contributes to the L-glutamate binding site. Pyridoxal 5'-phosphate is bound by residues 75–76, tryptophan 99, threonine 147, aspartate 166, and glutamine 189; that span reads AS. At lysine 190 the chain carries N6-(pyridoxal phosphate)lysine. Position 231-232 (231-232) interacts with pyridoxal 5'-phosphate; the sequence is NT.

The protein belongs to the class-V pyridoxal-phosphate-dependent aminotransferase family. SerC subfamily. As to quaternary structure, homodimer. Pyridoxal 5'-phosphate serves as cofactor.

It localises to the cytoplasm. The catalysed reaction is O-phospho-L-serine + 2-oxoglutarate = 3-phosphooxypyruvate + L-glutamate. It catalyses the reaction 4-(phosphooxy)-L-threonine + 2-oxoglutarate = (R)-3-hydroxy-2-oxo-4-phosphooxybutanoate + L-glutamate. It participates in amino-acid biosynthesis; L-serine biosynthesis; L-serine from 3-phospho-D-glycerate: step 2/3. It functions in the pathway cofactor biosynthesis; pyridoxine 5'-phosphate biosynthesis; pyridoxine 5'-phosphate from D-erythrose 4-phosphate: step 3/5. Its function is as follows. Catalyzes the reversible conversion of 3-phosphohydroxypyruvate to phosphoserine and of 3-hydroxy-2-oxo-4-phosphonooxybutanoate to phosphohydroxythreonine. The sequence is that of Phosphoserine aminotransferase from Bacteroides thetaiotaomicron (strain ATCC 29148 / DSM 2079 / JCM 5827 / CCUG 10774 / NCTC 10582 / VPI-5482 / E50).